The primary structure comprises 208 residues: Large ribosomal subunit protein uL3 (208 aa).

The tract at residues G116–A148 is disordered.

Belongs to the universal ribosomal protein uL3 family. As to quaternary structure, part of the 50S ribosomal subunit. Forms a cluster with proteins L14 and L19.

Its function is as follows. One of the primary rRNA binding proteins, it binds directly near the 3'-end of the 23S rRNA, where it nucleates assembly of the 50S subunit. The sequence is that of Large ribosomal subunit protein uL3 from Streptococcus pyogenes serotype M5 (strain Manfredo).